The primary structure comprises 531 residues: CTP synthase (531 aa).

The tract at residues 1-265 (MAKYIFITGG…DRIITERLNL (265 aa)) is amidoligase domain. CTP is bound at residue serine 13. Position 13 (serine 13) interacts with UTP. Position 14-19 (14-19 (SLGKGI)) interacts with ATP. Tyrosine 54 contacts L-glutamine. An ATP-binding site is contributed by aspartate 71. Residues aspartate 71 and glutamate 139 each contribute to the Mg(2+) site. CTP contacts are provided by residues 146–148 (DIE), 186–191 (KTKPTQ), and lysine 222. UTP-binding positions include 186–191 (KTKPTQ) and lysine 222. The Glutamine amidotransferase type-1 domain maps to 290 to 529 (NVALVGKYVE…IRACLEYKRK (240 aa)). Glycine 349 contacts L-glutamine. Cysteine 376 (nucleophile; for glutamine hydrolysis) is an active-site residue. Residues 377 to 380 (LGMQ), glutamate 400, and arginine 457 contribute to the L-glutamine site. Active-site residues include histidine 502 and glutamate 504.

This sequence belongs to the CTP synthase family. Homotetramer.

It carries out the reaction UTP + L-glutamine + ATP + H2O = CTP + L-glutamate + ADP + phosphate + 2 H(+). The enzyme catalyses L-glutamine + H2O = L-glutamate + NH4(+). The catalysed reaction is UTP + NH4(+) + ATP = CTP + ADP + phosphate + 2 H(+). It functions in the pathway pyrimidine metabolism; CTP biosynthesis via de novo pathway; CTP from UDP: step 2/2. With respect to regulation, allosterically activated by GTP, when glutamine is the substrate; GTP has no effect on the reaction when ammonia is the substrate. The allosteric effector GTP functions by stabilizing the protein conformation that binds the tetrahedral intermediate(s) formed during glutamine hydrolysis. Inhibited by the product CTP, via allosteric rather than competitive inhibition. Its function is as follows. Catalyzes the ATP-dependent amination of UTP to CTP with either L-glutamine or ammonia as the source of nitrogen. Regulates intracellular CTP levels through interactions with the four ribonucleotide triphosphates. The chain is CTP synthase from Aquifex aeolicus (strain VF5).